The sequence spans 225 residues: PKHD-type hydroxylase YbiX (225 aa).

The 100-residue stretch at 78–177 (TLSTPLFNRY…RVASFMWIQS (100 aa)) folds into the Fe2OG dioxygenase domain. 3 residues coordinate Fe cation: histidine 96, aspartate 98, and histidine 158. Arginine 168 provides a ligand contact to 2-oxoglutarate.

Fe(2+) is required as a cofactor. L-ascorbate serves as cofactor.

This Shigella boydii serotype 4 (strain Sb227) protein is PKHD-type hydroxylase YbiX.